The chain runs to 104 residues: Nucleoid-associated protein DICTH_1981 (104 aa).

A disordered region spans residues 85 to 104 (KSAEKMGSLADGLPLPPGLF).

Belongs to the YbaB/EbfC family. As to quaternary structure, homodimer.

The protein resides in the cytoplasm. The protein localises to the nucleoid. Its function is as follows. Binds to DNA and alters its conformation. May be involved in regulation of gene expression, nucleoid organization and DNA protection. The chain is Nucleoid-associated protein DICTH_1981 from Dictyoglomus thermophilum (strain ATCC 35947 / DSM 3960 / H-6-12).